The chain runs to 456 residues: MGQTLFDKVWKKHVLHGKEGEPQLLYIDLHLIHEVTSPQAFEGLRIQNRKLRRPDLTFATLDHNVPTIDIFNIKDEIANKQITTLQQNAKDFGVHIFDMGSDEQGIVHMVGPETGLTQPGKTIVCGDSHTATHGAFGAIAFGIGTSEVEHVFATQTLWQTKPKNLKININGSLPAGVYAKDIILYLINQYGVDFGTGYALEFTGETIKNLSMEARMTICNMAIEAGAKYGLMQPDETTFNYVKGRPYATDFDSSMAWWKELYSDDDAYFDKVIELDVTNLEPQVTWGTNPEMGVSFSNPFPEIKNANDQRAYDYMGLHPGQKAEDIKLGYVFLGSCTNARLSDLIEASHIIKGQQVHPNITAIVVPGSRTVKKEAEALGLDKLFKDAGFEWREPGCSMCLGMNPDQVPEGVHCASTSNRNFEGRQGKGARTHLVSPVMAAAAAINGKFIDVRKVVV.

3 residues coordinate [4Fe-4S] cluster: Cys336, Cys396, and Cys399.

This sequence belongs to the aconitase/IPM isomerase family. LeuC type 1 subfamily. In terms of assembly, heterodimer of LeuC and LeuD. The cofactor is [4Fe-4S] cluster.

It catalyses the reaction (2R,3S)-3-isopropylmalate = (2S)-2-isopropylmalate. It functions in the pathway amino-acid biosynthesis; L-leucine biosynthesis; L-leucine from 3-methyl-2-oxobutanoate: step 2/4. Catalyzes the isomerization between 2-isopropylmalate and 3-isopropylmalate, via the formation of 2-isopropylmaleate. This Staphylococcus epidermidis (strain ATCC 12228 / FDA PCI 1200) protein is 3-isopropylmalate dehydratase large subunit.